Reading from the N-terminus, the 340-residue chain is DNA primase large subunit PriL (340 aa).

Residues cysteine 229, cysteine 301, cysteine 310, and cysteine 318 each coordinate [4Fe-4S] cluster.

The protein belongs to the eukaryotic-type primase large subunit family. In terms of assembly, heterodimer of a small subunit (PriS) and a large subunit (PriL). It depends on [4Fe-4S] cluster as a cofactor.

Its function is as follows. Regulatory subunit of DNA primase, an RNA polymerase that catalyzes the synthesis of short RNA molecules used as primers for DNA polymerase during DNA replication. Stabilizes and modulates the activity of the small subunit, increasing the rate of DNA synthesis, and conferring RNA synthesis capability. The DNA polymerase activity may enable DNA primase to also catalyze primer extension after primer synthesis. May also play a role in DNA repair. The sequence is that of DNA primase large subunit PriL from Thermoplasma acidophilum (strain ATCC 25905 / DSM 1728 / JCM 9062 / NBRC 15155 / AMRC-C165).